The chain runs to 490 residues: Metalloreductase STEAP2 (490 aa).

NADP(+) contacts are provided by residues 38–41, 60–61, 93–100, asparagine 118, and alanine 151; these read SGDF, SR, and IHREHYTS. Tryptophan 152 and aspartate 160 together coordinate FAD. Residues 208-228 form a helical membrane-spanning segment; it reads LFTLWRGPVVVAISLATFFFL. Tyrosine 229 contributes to the Fe(3+) binding site. The helical transmembrane segment at 259 to 279 threads the bilayer; that stretch reads LPIVAITLLSLVYLAGLLAAA. The region spanning 259–407 is the Ferric oxidoreductase domain; the sequence is LPIVAITLLS…LGYVALLIST (149 aa). 2 residues coordinate FAD: glutamine 281 and arginine 302. 4 helical membrane-spanning segments follow: residues 305 to 325, 359 to 379, 393 to 413, and 432 to 452; these read LGLL…CLPM, MYIS…VTSI, FIQS…VLIY, and FVLA…LFLP. Histidine 316 is a heme b binding site. Residue tyrosine 319 coordinates Fe(3+). FAD is bound by residues serine 378 and glutamine 395. Residue histidine 409 coordinates heme b. Phosphoserine is present on serine 483.

Belongs to the STEAP family. FAD serves as cofactor. Requires heme b as cofactor. Expressed at high levels in prostate and at significantly lower levels in heart, brain, kidney, pancreas, and ovary.

Its subcellular location is the endosome membrane. It localises to the cell membrane. It carries out the reaction 2 Fe(2+) + NADP(+) + H(+) = 2 Fe(3+) + NADPH. The catalysed reaction is 2 Cu(+) + NADP(+) + H(+) = 2 Cu(2+) + NADPH. Functionally, integral membrane protein that functions as a NADPH-dependent ferric-chelate reductase, using NADPH from one side of the membrane to reduce a Fe(3+) chelate that is bound on the other side of the membrane. Mediates sequential transmembrane electron transfer from NADPH to FAD and onto heme, and finally to the Fe(3+) chelate. Can also reduce Cu(2+) to Cu(1+). In Homo sapiens (Human), this protein is Metalloreductase STEAP2 (STEAP2).